Here is a 718-residue protein sequence, read N- to C-terminus: LON peptidase N-terminal domain and RING finger protein 3 (718 aa).

A disordered region spans residues 1-69 (MESLRTEQML…PGTSTPESKV (69 aa)). A compositionally biased stretch (polar residues) spans 57 to 66 (EQSPGTSTPE). A TPR 1 repeat occupies 67-100 (SKVLLTQADALASRGRIREALEVYRQLSERQQLV). The RING-type 1 zinc-finger motif lies at 158 to 196 (CRKCHGFLSDPVSLSCGHTFCKLCLERGRAADRRCALCG). TPR repeat units follow at residues 243–276 (ASQLRHEGNRLYRERQVEAALLKYNEAVKLAPND) and 278–310 (LLYSNRSQIYFTLESHENALHDAEIACKLRPMG). The interval 322–413 (SQEEAAARGD…TDQGDKPALS (92 aa)) is disordered. Residues 339–352 (AKVKGDGQQHHMKD) show a composition bias toward basic and acidic residues. The RING-type 2 zinc-finger motif lies at 426-464 (CALCMRLFYEPVTTPCGHTFCLKCLERCLDHNAKCPLCK). A Lon N-terminal domain is found at 505–714 (MEELSNLNKN…GIRRVLAFIS (210 aa)).

In Macaca fascicularis (Crab-eating macaque), this protein is LON peptidase N-terminal domain and RING finger protein 3 (LONRF3).